Here is a 119-residue protein sequence, read N- to C-terminus: C-X-C motif chemokine 17 (119 aa).

Residues 1-22 form the signal peptide; that stretch reads MKLLASPFLLLLPVMLMSMVFS. The segment at 75 to 100 is disordered; sequence CPCDHVKGREKKNRHQKHHRKSQRPS. 2 cysteine pairs are disulfide-bonded: Cys-75–Cys-103 and Cys-77–Cys-110. The span at 82–98 shows a compositional bias: basic residues; that stretch reads GREKKNRHQKHHRKSQR.

The protein belongs to the intercrine alpha (chemokine CxC) family. Post-translationally, likely to undergo an endoproteolytic process to form a four-cysteine-containing mature peptide with a canonical CXC chemokine scaffold after secretion. Detected in lung, trachea, lung, tongue thyroid, submaxillary gland, epididymis, and uterus tissues and at a lower level in ovary, prostate and in intestinal tissues.

It localises to the secreted. Chemokine that acts as a chemoattractant for monocytes, macrophages and dendritic cells. Plays a role in angiogenesis and possibly in the development of tumors. Acts as an anti-inflammatory in the stomach. May play a role in the innate defense against infections. Activates the C-X-C chemokine receptor GPR35 to induce a rapid and transient rise in the level of intracellular calcium ions. The protein is C-X-C motif chemokine 17 (Cxcl17) of Mus musculus (Mouse).